Here is a 92-residue protein sequence, read N- to C-terminus: Large ribosomal subunit protein eL43 (92 aa).

The C4-type zinc-finger motif lies at 39-60 (CEFCGKYAVKRKAVGIWGCKAC).

Belongs to the eukaryotic ribosomal protein eL43 family.

The sequence is that of Large ribosomal subunit protein eL43 (RPL37A) from Gossypium hirsutum (Upland cotton).